A 370-amino-acid polypeptide reads, in one-letter code: tRNA 2-selenouridine synthase (370 aa).

The 125-residue stretch at 12-136 folds into the Rhodanese domain; sequence FLDDVPMMDM…MRTFLLETTQ (125 aa). The S-selanylcysteine intermediate role is filled by Cys-95.

It belongs to the SelU family. As to quaternary structure, monomer.

The catalysed reaction is 5-methylaminomethyl-2-thiouridine(34) in tRNA + selenophosphate + (2E)-geranyl diphosphate + H2O + H(+) = 5-methylaminomethyl-2-selenouridine(34) in tRNA + (2E)-thiogeraniol + phosphate + diphosphate. The enzyme catalyses 5-methylaminomethyl-2-thiouridine(34) in tRNA + (2E)-geranyl diphosphate = 5-methylaminomethyl-S-(2E)-geranyl-thiouridine(34) in tRNA + diphosphate. It catalyses the reaction 5-methylaminomethyl-S-(2E)-geranyl-thiouridine(34) in tRNA + selenophosphate + H(+) = 5-methylaminomethyl-2-(Se-phospho)selenouridine(34) in tRNA + (2E)-thiogeraniol. It carries out the reaction 5-methylaminomethyl-2-(Se-phospho)selenouridine(34) in tRNA + H2O = 5-methylaminomethyl-2-selenouridine(34) in tRNA + phosphate. Functionally, involved in the post-transcriptional modification of the uridine at the wobble position (U34) of tRNA(Lys), tRNA(Glu) and tRNA(Gln). Catalyzes the conversion of 2-thiouridine (S2U-RNA) to 2-selenouridine (Se2U-RNA). Acts in a two-step process involving geranylation of 2-thiouridine (S2U) to S-geranyl-2-thiouridine (geS2U) and subsequent selenation of the latter derivative to 2-selenouridine (Se2U) in the tRNA chain. This chain is tRNA 2-selenouridine synthase, found in Pseudomonas putida (strain GB-1).